We begin with the raw amino-acid sequence, 81 residues long: Conotoxin Im016 (81 aa).

Residues 1 to 21 form the signal peptide; sequence MSTLGMMLLILLLLVPLATFA. Positions 22 to 31 are excised as a propeptide; sequence DDGPTMRGHR.

It belongs to the conotoxin N superfamily. Contains 5 disulfide bonds. In terms of tissue distribution, expressed by the venom duct.

Its subcellular location is the secreted. Probable neurotoxin. The polypeptide is Conotoxin Im016 (Conus imperialis (Imperial cone)).